The following is an 881-amino-acid chain: MAASGGEGSRDVRAPGPPPQQPGARPAVRFRDEAFLNFTSMHGVQPIIARIRELSQQQLDVTQVPRLQWFRDVAALEVPTGLPLREFPFAAYLITGNAGSGKSTCVQTLNEVLDCVVTGATRIAAQNMYVKLSGAFLSRPINTIFHEFGFRGNHVQAQLGQHPYTLASSPASLEDLQRRDLTYYWEVILDITKRALAAHGGEDARNEFHALTALEQTLGLGQGALTRLASVTHGALPAFTRSNIIVIDEAGLLGRHLLTTVVYCWWMINALYHTPQYAGRLRPVLVCVGSPTQTASLESTFEHQKLRCSVRQSENVLTYLICNRTLREYTRLSHSWAIFINNKRCVEHEFGNLMKVLEYGLPITEEHMQFVDRFVVPESYITNPANLPGWTRLFSSHKEVSAYMAKLHAYLKVTREGEFVVFTLPVLTFVSVKEFDEYRRLTQQPTLTMEKWITANASRITNYSQSQDQDAGHVRCEVHSKQQLVVARNDITYVLNSQVAVTARLRKMVFGFDGTFRTFEAVLRDDSFVKTQGETSVEFAYRFLSRLMFGGLIHFYNFLQRPGLDATQRTLAYGRLGELTAELLSLRRDAAGASATRAADTSDRSPGERAFNFKHLGPRDGGPDDFPDDDLDVIFAGLDEQQLDVFYCHYALEEPETTAAVHAQFGLLKRAFLGRYLILRELFGEVFESAPFSTYVDNVIFRGCELLTGSPRGGLMSVALQTDNYTLMGYTYTRVFAFAEELRRRHATAGVAEFLEESPLPYIVLRDQHGFMSVVNTNISEFVESIDSTELAMAINADYGISSKLAMTITRSQGLSLDKVAICFTPGNLRLNSAYVAMSRTTSSEFLHMNLNPLRERHERDDVISEHILSALRDPNVVIVY.

The tract at residues 1–26 (MAASGGEGSRDVRAPGPPPQQPGARP) is disordered. Residue 96 to 103 (GNAGSGKS) coordinates ATP.

This sequence belongs to the herpesviridae helicase family. In terms of assembly, associates with the primase and the primase-associated factor to form the helicase-primase complex.

Its subcellular location is the host nucleus. Component of the helicase/primase complex. Unwinds the DNA at the replication forks and generates single-stranded DNA for both leading and lagging strand synthesis. The primase synthesizes short RNA primers on the lagging strand that the polymerase elongates using dNTPs. Possesses helicase-like motifs and therefore may act as the helicase subunit of the complex. This is DNA replication helicase from Human herpesvirus 2 (strain HG52) (HHV-2).